A 1005-amino-acid chain; its full sequence is Espin-like protein (1005 aa).

ANK repeat units follow at residues 1-31 (MEAQ…RPDI), 35-64 (LGAG…LPGN), 69-99 (NGAT…GLQD), 103-132 (SGVS…AATL), 136-166 (EGAL…GVNQ), 170-200 (SGAS…DVRL), 204-234 (DGMS…GLTA), 238-267 (EGAT…PIMR), 270-299 (WGGT…DPFL), and 303-332 (DGYT…PVRV). Disordered regions lie at residues 355-383 (EERR…VPRE) and 458-480 (ADHP…AAEQ). Over residues 458 to 469 (ADHPPEDQDQSQ) the composition is skewed to basic and acidic residues. Residues 502–539 (EDDLVYLEKQINDLQLRRRCQEYESELGRLAAQLQALL) are a coiled coil. Disordered stretches follow at residues 611–643 (LAQG…QREI), 692–729 (PRGD…GPGL), 764–794 (LEAQ…PRLG), and 951–975 (PHAS…SQGS).

Interacts with MYO3A (via C-terminus). Interacts with MYO3B (via C-terminus). Expressed in inner ear hair cells. Expressed in utricle hair bundles (at protein level). Expressed in choclea (at protein level).

The protein resides in the cell projection. The protein localises to the stereocilium. Its function is as follows. Binds to but does not cross-link actin. Required for the formation and maintenance of inner ear hair cell stereocilia and staircase formation. Essential for normal hearing. This chain is Espin-like protein (Espnl), found in Mus musculus (Mouse).